Reading from the N-terminus, the 86-residue chain is MDGHDSEDTKQSTADMTAFVQNLLQQMQTRFQTMSDSIITKIDDMGGRINELEQSINDLRAEMGVEGTPPPASKSGDEPKTPASSS.

The stretch at 34-63 (MSDSIITKIDDMGGRINELEQSINDLRAEM) forms a coiled coil. Residues 42–52 (IDDMGGRINEL) form a required for interactions with heat shock factors (HSFs) region. Residues 59-86 (LRAEMGVEGTPPPASKSGDEPKTPASSS) are disordered.

Belongs to the HSBP1 family. Homohexamer. Interacts with HSFA1A, HSFA1B and HSFA2. Mostly expressed in siliques and flowers, and, to a lower extent, in roots, stems and leaves.

It localises to the nucleus. Its subcellular location is the cytoplasm. The protein resides in the cytosol. Functionally, negative regulator of the heat shock (HS) response. Affects negatively HSFA1B DNA-binding capacity in vitro. Involved in acquired thermotolerance but not basal thermotolerance. Crucial for seed development, after fertilization and during embryogenesis. The protein is Heat shock factor-binding protein of Arabidopsis thaliana (Mouse-ear cress).